The sequence spans 105 residues: Protein LBH (105 aa).

The 87-residue stretch at 18-104 folds into the LBH domain; sequence MTEVMMNTQP…CEETAKENKE (87 aa). S63 is modified (phosphoserine). The span at 86–96 shows a compositional bias: acidic residues; that stretch reads LVQEDEQDNCE. The interval 86–105 is disordered; the sequence is LVQEDEQDNCEETAKENKEQ.

It belongs to the LBH family. As to expression, highly expressed in heart, and expressed at low levels in placenta, lung, skeletal muscle, kidney and liver.

The protein resides in the nucleus. Its subcellular location is the cytoplasm. In terms of biological role, transcriptional activator which may act in mitogen-activated protein kinase signaling pathway. The protein is Protein LBH of Homo sapiens (Human).